The following is a 187-amino-acid chain: Fibroblast growth factor 4A (187 aa).

An N-terminal signal peptide occupies residues methionine 1 to cysteine 22.

It belongs to the heparin-binding growth factors family.

Its subcellular location is the secreted. In terms of biological role, plays an important role in the regulation of embryonic development, cell proliferation, and cell differentiation. Good candidate for an inducing factor with possible roles both in mesoderm induction at the blastula stage and in the formation of the anteroposterior axis at the gastrula stage. The chain is Fibroblast growth factor 4A (fgf4-a) from Xenopus laevis (African clawed frog).